Reading from the N-terminus, the 902-residue chain is Protein NrfI (902 aa).

The next 10 membrane-spanning stretches (helical) occupy residues 9–29, 75–95, 300–320, 335–355, 602–622, 659–679, 731–751, 772–792, 832–852, and 868–888; these read YITLTLLFLLLAVGAAIATFI, FLFHIAFVVILLGAGLTRYLG, VTYLGYALLFLGLLWNLLDPT, LSLLLPLCLLSPLASSLYAQS, LVLGFLVLLSAFGLLFFPPLA, DTYESMLYISWSGMLGALLFF, SYGFFGVGAFLGSFALALFIL, VSLILGLTLLVIGNFLGGIWA, YLFSLLSLWGFGSILMTYFGV, and LPIPLWVYALSLALALLSLIA.

The protein in the C-terminal section; belongs to the CcmF/CycK/Ccl1/NrfE/CcsA family.

It is found in the cell membrane. Its function is as follows. May play a role in cytochrome c biogenesis and may be required for maturation of the NrfA protein. The polypeptide is Protein NrfI (nrfI) (Wolinella succinogenes (strain ATCC 29543 / DSM 1740 / CCUG 13145 / JCM 31913 / LMG 7466 / NCTC 11488 / FDC 602W) (Vibrio succinogenes)).